We begin with the raw amino-acid sequence, 120 residues long: MFLLYEYDIFWAFLIISSAIPFLAFLISGILSPIRKGPEKLSSYESGIEPIGDAWLQFRIRYYMFALVFVVFDVETVFLYPWAMSFDVLGVSAFIEAFIFVLILILGLVYAWRKGALEWS.

Transmembrane regions (helical) follow at residues 9–29 (IFWAFLIISSAIPFLAFLISG), 64–84 (MFALVFVVFDVETVFLYPWAM), and 88–108 (VLGVSAFIEAFIFVLILILGL).

This sequence belongs to the complex I subunit 3 family. As to quaternary structure, NDH is composed of at least 16 different subunits, 5 of which are encoded in the nucleus.

The protein localises to the plastid. Its subcellular location is the chloroplast thylakoid membrane. The catalysed reaction is a plastoquinone + NADH + (n+1) H(+)(in) = a plastoquinol + NAD(+) + n H(+)(out). It catalyses the reaction a plastoquinone + NADPH + (n+1) H(+)(in) = a plastoquinol + NADP(+) + n H(+)(out). Its function is as follows. NDH shuttles electrons from NAD(P)H:plastoquinone, via FMN and iron-sulfur (Fe-S) centers, to quinones in the photosynthetic chain and possibly in a chloroplast respiratory chain. The immediate electron acceptor for the enzyme in this species is believed to be plastoquinone. Couples the redox reaction to proton translocation, and thus conserves the redox energy in a proton gradient. This is NAD(P)H-quinone oxidoreductase subunit 3, chloroplastic from Aethionema cordifolium (Lebanon stonecress).